Consider the following 267-residue polypeptide: Serine/arginine-rich splicing factor 1 (267 aa).

The region spanning 16 to 91 (CRIYVGNLPP…YRLRVEFPRS (76 aa)) is the RRM 1 domain. 2 disordered regions span residues 90–137 (RSGR…PSRR) and 212–267 (KVDG…RSRT). Residues 93–127 (RGAGGRGGGGGGGGGGGGGGGGGGGGGGGGGGGAP) show a composition bias toward gly residues. One can recognise an RRM 2 domain in the interval 140–214 (YRVVVSGLPP…ETAYIRVKVD (75 aa)). The segment covering 224-267 (SRSRSRSRSRSRSRSNSRSRSYSPRRSRGSPRYSPRHSRSRSRT) has biased composition (basic residues).

This sequence belongs to the splicing factor SR family.

Its subcellular location is the cytoplasm. The protein localises to the nucleus speckle. Its function is as follows. May play a role in preventing exon skipping, ensuring the accuracy of splicing and regulating alternative splicing. In Xenopus tropicalis (Western clawed frog), this protein is Serine/arginine-rich splicing factor 1 (srsf1).